Here is a 136-residue protein sequence, read N- to C-terminus: Large ribosomal subunit protein uL16c (136 aa).

The protein belongs to the universal ribosomal protein uL16 family. In terms of assembly, part of the 50S ribosomal subunit.

The protein resides in the plastid. It is found in the chloroplast. This chain is Large ribosomal subunit protein uL16c, found in Oryza sativa (Rice).